Consider the following 731-residue polypeptide: Actin filament-associated protein 1 (731 aa).

Met-1 is subject to N-acetylmethionine. A disordered region spans residues 56–90 (NNLPAPPQMPLPEIPQPWLPPDSGPPPLPTSSLPE). The span at 59 to 84 (PAPPQMPLPEIPQPWLPPDSGPPPLP) shows a compositional bias: pro residues. The short motif at 70 to 73 (PQPW) is the SH3-binding element. The short motif at 93-96 (YEEA) is the SH2-binding 1 element. The disordered stretch occupies residues 118–139 (SSSYESYDEEEEDGKGKKTRHQ). Residues 152-248 (DAKICAFLLR…WLKVIKEAYS (97 aa)) enclose the PH 1 domain. The segment at 252 to 318 (GPVDPECSPP…SKSEAKGTVS (67 aa)) is disordered. The segment covering 271–284 (AELEKKLSSERPSS) has biased composition (basic and acidic residues). Residues Ser-283 and Ser-284 each carry the phosphoserine modification. The PH 2 domain maps to 348–442 (DVPTCGYLNV…WIGILLAETG (95 aa)). The SH2-binding 2 signature appears at 452 to 457 (YDYIDV). The disordered stretch occupies residues 513-544 (KNKKPPASSNGVPVKGKAPSSQQKKVETAGGV). Ser-549 is subject to Phosphoserine. Residues 558 to 649 (KNRVEADAKR…VKESLKKALA (92 aa)) adopt a coiled-coil conformation. Positions 595–638 (DLRAAIEVNAGRKTQAALEDKLKRLEEECKQREAERVSLELELT) are interaction with F-actin. The disordered stretch occupies residues 658 to 731 (IEPRSGTSSP…AKEWELKNGT (74 aa)). A phosphoserine mark is found at Ser-665, Ser-666, and Ser-669. At Thr-676 the chain carries Phosphothreonine. The segment covering 678 to 687 (ENSPISSCDT) has biased composition (polar residues). Phosphoserine occurs at positions 680 and 688. The span at 721–731 (KAKEWELKNGT) shows a compositional bias: basic and acidic residues.

Monomer and homomultimer. Interacts via its C-terminus with F-actin; probably involving AFAP1 multimers. Interacts with activated SRC SH3-SH2 domains. Interacts via its PH 1 domain with PRKCA, PRKCB and PRKCI. Phosphorylated on tyrosine residues by SRC.

The protein localises to the cytoplasm. The protein resides in the cytoskeleton. It is found in the stress fiber. Its function is as follows. Can cross-link actin filaments into both network and bundle structures. May modulate changes in actin filament integrity and induce lamellipodia formation. May function as an adapter molecule that links other proteins, such as SRC and PKC to the actin cytoskeleton. The protein is Actin filament-associated protein 1 (Afap1) of Mus musculus (Mouse).